Here is a 504-residue protein sequence, read N- to C-terminus: Maturase K (504 aa).

Belongs to the intron maturase 2 family. MatK subfamily.

The protein localises to the plastid. It localises to the chloroplast. Usually encoded in the trnK tRNA gene intron. Probably assists in splicing its own and other chloroplast group II introns. This chain is Maturase K, found in Aucuba japonica (Japanese laurel).